A 189-amino-acid chain; its full sequence is Elongation factor P (189 aa).

Residue Lys34 is modified to N6-(3,6-diaminohexanoyl)-5-hydroxylysine.

Belongs to the elongation factor P family. In terms of processing, may be beta-lysylated on the epsilon-amino group of Lys-34 by the combined action of EpmA and EpmB, and then hydroxylated on the C5 position of the same residue by EpmC (if this protein is present). Lysylation is critical for the stimulatory effect of EF-P on peptide-bond formation. The lysylation moiety may extend toward the peptidyltransferase center and stabilize the terminal 3-CCA end of the tRNA. Hydroxylation of the C5 position on Lys-34 may allow additional potential stabilizing hydrogen-bond interactions with the P-tRNA.

The protein resides in the cytoplasm. It functions in the pathway protein biosynthesis; polypeptide chain elongation. Its function is as follows. Involved in peptide bond synthesis. Alleviates ribosome stalling that occurs when 3 or more consecutive Pro residues or the sequence PPG is present in a protein, possibly by augmenting the peptidyl transferase activity of the ribosome. Modification of Lys-34 is required for alleviation. The polypeptide is Elongation factor P (Legionella pneumophila (strain Lens)).